The sequence spans 334 residues: Phosphatidylglycerol--prolipoprotein diacylglyceryl transferase (334 aa).

Helical transmembrane passes span 22 to 42, 54 to 74, 105 to 125, and 131 to 151; these read FLPF…VVAA, AEPG…IIGA, IWEG…GVGI, and GLRF…AQAI. R153 is a binding site for a 1,2-diacyl-sn-glycero-3-phospho-(1'-sn-glycerol). 2 helical membrane-spanning segments follow: residues 191 to 211 and 251 to 271; these read LFQP…FVIL and FLGI…GAII. Positions 296–334 are disordered; the sequence is PQAEVESGETDPEEILHADDDEERTGTHKPQATSLSGSN. Residues 301-318 are compositionally biased toward acidic residues; sequence ESGETDPEEILHADDDEE. Residues 323-334 show a composition bias toward polar residues; the sequence is HKPQATSLSGSN.

This sequence belongs to the Lgt family.

The protein resides in the cell membrane. It carries out the reaction L-cysteinyl-[prolipoprotein] + a 1,2-diacyl-sn-glycero-3-phospho-(1'-sn-glycerol) = an S-1,2-diacyl-sn-glyceryl-L-cysteinyl-[prolipoprotein] + sn-glycerol 1-phosphate + H(+). Its pathway is protein modification; lipoprotein biosynthesis (diacylglyceryl transfer). In terms of biological role, catalyzes the transfer of the diacylglyceryl group from phosphatidylglycerol to the sulfhydryl group of the N-terminal cysteine of a prolipoprotein, the first step in the formation of mature lipoproteins. The protein is Phosphatidylglycerol--prolipoprotein diacylglyceryl transferase of Leifsonia xyli subsp. xyli (strain CTCB07).